Reading from the N-terminus, the 150-residue chain is Small ribosomal subunit protein eS19 (150 aa).

This sequence belongs to the eukaryotic ribosomal protein eS19 family. Part of the 30S ribosomal subunit.

Its function is as follows. May be involved in maturation of the 30S ribosomal subunit. The sequence is that of Small ribosomal subunit protein eS19 from Pyrococcus horikoshii (strain ATCC 700860 / DSM 12428 / JCM 9974 / NBRC 100139 / OT-3).